Reading from the N-terminus, the 137-residue chain is Peptide methionine sulfoxide reductase MsrB (137 aa).

One can recognise a MsrB domain in the interval 7–129; that stretch reads AEELKKNLSE…NSASLRFTDG (123 aa). The Zn(2+) site is built by C46, C49, C95, and C98. C118 (nucleophile) is an active-site residue.

This sequence belongs to the MsrB Met sulfoxide reductase family. The cofactor is Zn(2+).

It catalyses the reaction L-methionyl-[protein] + [thioredoxin]-disulfide + H2O = L-methionyl-(R)-S-oxide-[protein] + [thioredoxin]-dithiol. The chain is Peptide methionine sulfoxide reductase MsrB from Escherichia coli O8 (strain IAI1).